A 358-amino-acid polypeptide reads, in one-letter code: Electron transfer flavoprotein subunit alpha, mitochondrial (358 aa).

298–326 (LYMAFGVSGAIQHLAGMRDSKVIVAVNKD) serves as a coordination point for FAD.

The protein belongs to the ETF alpha-subunit/FixB family. In terms of assembly, heterodimer of an alpha and a beta subunit. It depends on FAD as a cofactor.

It is found in the mitochondrion matrix. The electron transfer flavoprotein serves as a specific electron acceptor for several dehydrogenases, including five acyl-CoA dehydrogenases, glutaryl-CoA and sarcosine dehydrogenase. It transfers the electrons to the main mitochondrial respiratory chain via ETF-ubiquinone oxidoreductase (ETF dehydrogenase). This chain is Electron transfer flavoprotein subunit alpha, mitochondrial (ETFA), found in Oryza sativa subsp. indica (Rice).